The chain runs to 926 residues: Serine/threonine-protein kinase SIK2 (926 aa).

Residues 20–271 form the Protein kinase domain; that stretch reads YDIEGTLGKG…IAQIKEHKWM (252 aa). Thr-25 is modified (phosphothreonine). ATP is bound by residues 26-34 and Lys-49; that span reads LGKGNFAVV. Lys-53 is modified (N6-acetyllysine; by EP300). Residue Asp-142 is the Proton acceptor of the active site. Thr-175 carries the post-translational modification Phosphothreonine; by LKB1. One can recognise a UBA domain in the interval 295-335; it reads EFNEQVLRLMHSLGIDQQKTIESLQNKSYNHFAAIYFLLVE. Position 484 is a phosphothreonine (Thr-484). Ser-534 and Ser-587 each carry phosphoserine. Composition is skewed to low complexity over residues 644 to 659 and 742 to 756; these read SSCPQEEVSQQQESVS and SSYPQPSQQLPLPRQ. 3 disordered regions span residues 644–666, 742–776, and 801–896; these read SSCPQEEVSQQQESVSTLPASVH, SSYPQPSQQLPLPRQETPPPSQQAPPFSLTQPLSP, and PLPS…SSYD. The span at 765 to 774 shows a compositional bias: polar residues; that stretch reads APPFSLTQPL. Residues 822 to 834 are compositionally biased toward pro residues; the sequence is QPPPPPPPPPPRQ.

It belongs to the protein kinase superfamily. CAMK Ser/Thr protein kinase family. SNF1 subfamily. In terms of assembly, interacts with and phosphorylates TORC2/CRTC2. Requires Mg(2+) as cofactor. Phosphorylated at Thr-175 by STK11/LKB1 in complex with STE20-related adapter-alpha (STRADA) pseudo kinase and CAB39. Phosphorylated at Thr-484 in response to insulin in adipocytes. Post-translationally, acetylation at Lys-53 inhibits kinase activity. Deacetylated by HDAC6.

The protein resides in the cytoplasm. It is found in the endoplasmic reticulum membrane. It carries out the reaction L-seryl-[protein] + ATP = O-phospho-L-seryl-[protein] + ADP + H(+). The catalysed reaction is L-threonyl-[protein] + ATP = O-phospho-L-threonyl-[protein] + ADP + H(+). Its activity is regulated as follows. Activated by phosphorylation on Thr-175. Functionally, serine/threonine-protein kinase that plays a role in many biological processes such as fatty acid oxidation, autophagy, immune response or glucose metabolism. Phosphorylates 'Ser-794' of IRS1 in insulin-stimulated adipocytes, potentially modulating the efficiency of insulin signal transduction. Inhibits CREB activity by phosphorylating and repressing TORCs, the CREB-specific coactivators. Phosphorylates EP300 and thus inhibits its histone acetyltransferase activity. In turn, regulates the DNA-binding ability of several transcription factors such as PPARA or MLXIPL. Also plays a role in thymic T-cell development. This is Serine/threonine-protein kinase SIK2 (SIK2) from Homo sapiens (Human).